Reading from the N-terminus, the 561-residue chain is Urocanate hydratase (561 aa).

NAD(+)-binding positions include 52–53 (GG), Gln130, 176–178 (GMG), Glu196, Arg201, 242–243 (NA), 263–267 (QTSAH), 273–274 (YL), and Tyr322. The active site involves Cys410. Gly492 serves as a coordination point for NAD(+).

This sequence belongs to the urocanase family. NAD(+) serves as cofactor.

The protein localises to the cytoplasm. The catalysed reaction is 4-imidazolone-5-propanoate = trans-urocanate + H2O. The protein operates within amino-acid degradation; L-histidine degradation into L-glutamate; N-formimidoyl-L-glutamate from L-histidine: step 2/3. In terms of biological role, catalyzes the conversion of urocanate to 4-imidazolone-5-propionate. This is Urocanate hydratase from Salmonella newport (strain SL254).